A 220-amino-acid chain; its full sequence is Small ribosomal subunit protein eS8 (220 aa).

2 disordered regions span residues 1–41 and 131–151; these read MGIS…LSSN and AKKD…KKSN. Residues 8–26 show a composition bias toward basic residues; it reads MHKRRATGGKQKAWRKKRK.

This sequence belongs to the eukaryotic ribosomal protein eS8 family.

In Oryza sativa subsp. japonica (Rice), this protein is Small ribosomal subunit protein eS8 (RPS8).